The primary structure comprises 1325 residues: uncharacterized protein (1325 aa).

The N-terminal stretch at Met1–Ala27 is a signal peptide. The N-palmitoyl cysteine moiety is linked to residue Cys28. Cys28 is lipidated: S-diacylglycerol cysteine. 2 disordered regions span residues Arg379–Gln402 and Asn430–Ser464. Over residues Thr436–Ser448 the composition is skewed to gly residues. Positions Thr449–Ser464 are enriched in low complexity.

Belongs to the MG307/MG309/MG338 family.

Its subcellular location is the cell membrane. This is an uncharacterized protein from Mycoplasma pneumoniae (strain ATCC 29342 / M129 / Subtype 1) (Mycoplasmoides pneumoniae).